We begin with the raw amino-acid sequence, 40 residues long: Photosystem II reaction center protein J (40 aa).

Residues 8–28 form a helical membrane-spanning segment; that stretch reads IPLWLIGTVTGIIVIGLIGIF.

The protein belongs to the PsbJ family. PSII is composed of 1 copy each of membrane proteins PsbA, PsbB, PsbC, PsbD, PsbE, PsbF, PsbH, PsbI, PsbJ, PsbK, PsbL, PsbM, PsbT, PsbX, PsbY, PsbZ, Psb30/Ycf12, at least 3 peripheral proteins of the oxygen-evolving complex and a large number of cofactors. It forms dimeric complexes.

It is found in the plastid. Its subcellular location is the chloroplast thylakoid membrane. Functionally, one of the components of the core complex of photosystem II (PSII). PSII is a light-driven water:plastoquinone oxidoreductase that uses light energy to abstract electrons from H(2)O, generating O(2) and a proton gradient subsequently used for ATP formation. It consists of a core antenna complex that captures photons, and an electron transfer chain that converts photonic excitation into a charge separation. In Piper cenocladum (Ant piper), this protein is Photosystem II reaction center protein J.